The chain runs to 248 residues: 2,3-bisphosphoglycerate-dependent phosphoglycerate mutase (248 aa).

Substrate contacts are provided by residues 8–15, 21–22, Arg60, 87–90, Lys98, 114–115, and 183–184; these read RHGESTWN, TG, ERHY, RR, and GN. His9 serves as the catalytic Tele-phosphohistidine intermediate. Glu87 serves as the catalytic Proton donor/acceptor.

This sequence belongs to the phosphoglycerate mutase family. BPG-dependent PGAM subfamily. As to quaternary structure, homodimer.

The enzyme catalyses (2R)-2-phosphoglycerate = (2R)-3-phosphoglycerate. The protein operates within carbohydrate degradation; glycolysis; pyruvate from D-glyceraldehyde 3-phosphate: step 3/5. In terms of biological role, catalyzes the interconversion of 2-phosphoglycerate and 3-phosphoglycerate. This is 2,3-bisphosphoglycerate-dependent phosphoglycerate mutase from Paraburkholderia phymatum (strain DSM 17167 / CIP 108236 / LMG 21445 / STM815) (Burkholderia phymatum).